The sequence spans 208 residues: Putative ribosomal protein uS2-like (208 aa).

Belongs to the universal ribosomal protein uS2 family.

The protein resides in the plastid. It localises to the chloroplast. The protein is Putative ribosomal protein uS2-like (rps2-2) of Chlamydomonas reinhardtii (Chlamydomonas smithii).